The chain runs to 118 residues: Ribonuclease P protein component (118 aa).

The protein belongs to the RnpA family. In terms of assembly, consists of a catalytic RNA component (M1 or rnpB) and a protein subunit.

It carries out the reaction Endonucleolytic cleavage of RNA, removing 5'-extranucleotides from tRNA precursor.. RNaseP catalyzes the removal of the 5'-leader sequence from pre-tRNA to produce the mature 5'-terminus. It can also cleave other RNA substrates such as 4.5S RNA. The protein component plays an auxiliary but essential role in vivo by binding to the 5'-leader sequence and broadening the substrate specificity of the ribozyme. This is Ribonuclease P protein component from Shewanella putrefaciens (strain CN-32 / ATCC BAA-453).